The chain runs to 127 residues: Large ribosomal subunit protein bL21 (127 aa).

Positions 102–127 (TDNAKPTKGPRPKKAKAEAPAADAAE) are disordered.

It belongs to the bacterial ribosomal protein bL21 family. In terms of assembly, part of the 50S ribosomal subunit. Contacts protein L20.

Its function is as follows. This protein binds to 23S rRNA in the presence of protein L20. This chain is Large ribosomal subunit protein bL21, found in Bradyrhizobium sp. (strain BTAi1 / ATCC BAA-1182).